We begin with the raw amino-acid sequence, 156 residues long: Small ribosomal subunit protein uS7 (156 aa).

It belongs to the universal ribosomal protein uS7 family. As to quaternary structure, part of the 30S ribosomal subunit. Contacts proteins S9 and S11.

In terms of biological role, one of the primary rRNA binding proteins, it binds directly to 16S rRNA where it nucleates assembly of the head domain of the 30S subunit. Is located at the subunit interface close to the decoding center, probably blocks exit of the E-site tRNA. This is Small ribosomal subunit protein uS7 from Streptococcus sanguinis (strain SK36).